We begin with the raw amino-acid sequence, 693 residues long: Golgin subfamily A member 6C (693 aa).

Disordered stretches follow at residues 20–71 (NKLA…DSQY), 497–547 (LPGE…GTEQ), and 629–693 (NPAD…MQDT). Positions 73-611 (ELAVALESSS…KLLELQELVL (539 aa)) form a coiled coil. The segment covering 537-547 (LPKEKADGTEQ) has biased composition (basic and acidic residues). The span at 679–693 (PVQQIVQLSPVMQDT) shows a compositional bias: polar residues.

This sequence belongs to the GOLGA6 family.

The polypeptide is Golgin subfamily A member 6C (GOLGA6C) (Homo sapiens (Human)).